The sequence spans 272 residues: MASSSSNRQFSHRNANTFLTYPKCPENPEIACQMIWELVVRWIPKYILCAREAHKDGSLHLHALLQTEKPVRISDSRFFDINGFHPNIQSAKSVNRVRDYILKEPLAVFERGTFIPRKSPFLGKSDSEVKEKKPSKDEIMRDIISHATSKAEYLSMIQKELPFDWSTKLQYFEYSANKLFPEIQEEFTNPHPPSSPDLLCNESINDWLQPNIFQVSPEAYMLLQPTCYTLEDAISDLQWMDSVSSHQMKDQESRASTSSAQQEPENLLGPEA.

A CRESS-DNA virus Rep endonuclease domain is found at 11 to 114; that stretch reads SHRNANTFLT…PLAVFERGTF (104 aa). Residues 18–21 carry the RCR-1 motif; sequence FLTY. Residues Glu-52, His-60, and His-62 each coordinate a divalent metal cation. Positions 60–62 match the RCR-2 motif; the sequence is HLH. Tyr-100 (for DNA cleavage activity) is an active-site residue. The RCR-3 signature appears at 100–103; it reads YILK. An a divalent metal cation-binding site is contributed by Glu-104. The oligomerization stretch occupies residues 175-187; sequence SANKLFPEIQEEF. Residues 198-202 carry the LXCXE motif, interaction with host RBR1 motif; the sequence is LLCNE. Residues 245 to 272 are disordered; it reads SHQMKDQESRASTSSAQQEPENLLGPEA. A compositionally biased stretch (polar residues) spans 254-264; the sequence is RASTSSAQQEP.

It belongs to the geminiviridae Rep protein family. Homooligomer. Interacts (via LXCXE domain) with host retinoblastoma-related protein 1 (RBR1), and may thereby deregulate the host cell cycle. Part of the C- and V-complexes which are RepA-Rep-DNA complexes involved in the c-sense and v-sense transcription. Mg(2+) serves as cofactor. It depends on Mn(2+) as a cofactor.

Its subcellular location is the host nucleus. It is found in the host cytoplasm. Its function is as follows. Implicated in enhancement of V-sense gene expression. Acts a an inhibitor of C-sense gene transcription. The chain is Replication-associated protein A from Maize streak virus genotype A (isolate South Africa) (MSV).